We begin with the raw amino-acid sequence, 364 residues long: Pre-small/secreted glycoprotein (364 aa).

An N-terminal signal peptide occupies residues 1–32; it reads MGVTGILQLPRDRFKRTSFFLWVIILFQRTFS. Residue N40 is glycosylated (N-linked (GlcNAc...) asparagine; by host). 2 disulfides stabilise this stretch: C108–C135 and C121–C147. 5 N-linked (GlcNAc...) asparagine; by host glycosylation sites follow: N204, N228, N238, N257, and N268.

The protein belongs to the filoviruses glycoprotein family. In terms of assembly, homodimer; disulfide-linked. The homodimers are linked by two disulfide bonds in a parallel orientation. Monomer. In terms of processing, this precursor is processed into mature sGP and delta-peptide by host furin or furin-like proteases. The cleavage site corresponds to the furin optimal cleavage sequence [KR]-X-[KR]-R. N-glycosylated. Post-translationally, O-glycosylated.

The protein localises to the secreted. Seems to possess an anti-inflammatory activity as it can reverse the barrier-decreasing effects of TNF alpha. Might therefore contribute to the lack of inflammatory reaction seen during infection in spite the of extensive necrosis and massive virus production. Does not seem to be involved in activation of primary macrophages. Does not seem to interact specifically with neutrophils. Its function is as follows. Viroporin that permeabilizes mammalian cell plasma membranes. It acts by altering permeation of ionic compounds and small molecules. This activity may lead to viral enterotoxic activity. This is Pre-small/secreted glycoprotein (GP) from Zaire ebolavirus (strain Gabon-94) (ZEBOV).